A 235-amino-acid polypeptide reads, in one-letter code: Sugar fermentation stimulation protein homolog (235 aa).

Belongs to the SfsA family.

In Azotobacter vinelandii (strain DJ / ATCC BAA-1303), this protein is Sugar fermentation stimulation protein homolog.